A 305-amino-acid chain; its full sequence is UDP-N-acetylenolpyruvoylglucosamine reductase (305 aa).

Residues 35–214 enclose the FAD-binding PCMH-type domain; that stretch reads VGGPAQALFT…RARMNEVQAH (180 aa). The active site involves R179. S228 functions as the Proton donor in the catalytic mechanism. The active site involves E298.

The protein belongs to the MurB family. FAD is required as a cofactor.

It localises to the cytoplasm. It catalyses the reaction UDP-N-acetyl-alpha-D-muramate + NADP(+) = UDP-N-acetyl-3-O-(1-carboxyvinyl)-alpha-D-glucosamine + NADPH + H(+). The protein operates within cell wall biogenesis; peptidoglycan biosynthesis. Its function is as follows. Cell wall formation. This is UDP-N-acetylenolpyruvoylglucosamine reductase from Nitrobacter winogradskyi (strain ATCC 25391 / DSM 10237 / CIP 104748 / NCIMB 11846 / Nb-255).